The sequence spans 391 residues: Mannose-6-phosphate isomerase (391 aa).

Positions 97, 99, 134, and 255 each coordinate Zn(2+). R274 is a catalytic residue. K280 carries the N6-acetyllysine modification.

The protein belongs to the mannose-6-phosphate isomerase type 1 family. Zn(2+) serves as cofactor.

The protein localises to the cytoplasm. It catalyses the reaction D-mannose 6-phosphate = D-fructose 6-phosphate. In terms of biological role, involved in the conversion of glucose to GDP-L-fucose, which can be converted to L-fucose, a capsular polysaccharide. In Escherichia coli (strain K12), this protein is Mannose-6-phosphate isomerase (manA).